We begin with the raw amino-acid sequence, 116 residues long: Non-specific lipid transfer protein GPI-anchored 17 (116 aa).

A signal peptide spans 1–24; the sequence is MKIGVVLVLLTVFVVVMSSTSVSA. Intrachain disulfides connect Cys-31–Cys-74, Cys-42–Cys-58, and Cys-59–Cys-99. Asn-107 carries the GPI-anchor amidated asparagine lipid modification. Residues 108–116 constitute a propeptide, removed in mature form; the sequence is GKNFKNTSL. N-linked (GlcNAc...) asparagine glycosylation occurs at Asn-113.

The protein belongs to the plant LTP family. As to expression, expressed in seedlings, preferentially in roots.

Its subcellular location is the cell membrane. Probable lipid transfer protein. The chain is Non-specific lipid transfer protein GPI-anchored 17 from Arabidopsis thaliana (Mouse-ear cress).